An 87-amino-acid chain; its full sequence is Bradykinin-potentiating peptide NDBP12 (87 aa).

The first 22 residues, 1–22, serve as a signal peptide directing secretion; sequence MNKRVLLVIFFVTLLVADEVNS. The span at 64 to 75 shows a compositional bias: low complexity; sequence PAEAPAPAAAAP. The interval 64–87 is disordered; sequence PAEAPAPAAAAPEEPPVEQRRRRR.

It belongs to the non-disulfide-bridged peptide (NDBP) superfamily. Long chain multifunctional peptide (group 2) family. Expressed by the venom gland.

The protein localises to the secreted. In terms of biological role, inhibits angiotensin-converting enzyme (ACE), but does not serve as substrate for the enzyme. Potentiates bradykinin (BK) on the isolated guinea pig ileum as well as the isolated rat uterus for contraction. Also potentiates in vivo the depressor effect of BK on arterial blood pressure in the normotensive anesthetized rat. The chain is Bradykinin-potentiating peptide NDBP12 from Lychas mucronatus (Chinese swimming scorpion).